Reading from the N-terminus, the 497-residue chain is Cytochrome P450 2D6 (497 aa).

Residue D301 participates in substrate binding. A heme-binding site is contributed by C443.

Belongs to the cytochrome P450 family. It depends on heme as a cofactor.

Its subcellular location is the endoplasmic reticulum membrane. It is found in the microsome membrane. The catalysed reaction is (5Z,8Z,11Z,14Z)-eicosatetraenoate + reduced [NADPH--hemoprotein reductase] + O2 = (8R,9S)-epoxy-(5Z,11Z,14Z)-eicosatrienoate + oxidized [NADPH--hemoprotein reductase] + H2O + H(+). The enzyme catalyses (5Z,8Z,11Z,14Z)-eicosatetraenoate + reduced [NADPH--hemoprotein reductase] + O2 = (11R,12S)-epoxy-(5Z,8Z,14Z)-eicosatrienoate + oxidized [NADPH--hemoprotein reductase] + H2O + H(+). It catalyses the reaction (5Z,8Z,11Z,14Z)-eicosatetraenoate + reduced [NADPH--hemoprotein reductase] + O2 = (14S,15R)-epoxy-(5Z,8Z,11Z)-eicosatrienoate + oxidized [NADPH--hemoprotein reductase] + H2O + H(+). It carries out the reaction N-(5Z,8Z,11Z,14Z-eicosatetraenoyl)-ethanolamine + reduced [NADPH--hemoprotein reductase] + O2 = N-(8,9-epoxy-5Z,11Z,14Z-eicosatrienoyl)-ethanolamine + oxidized [NADPH--hemoprotein reductase] + H2O + H(+). The catalysed reaction is N-(5Z,8Z,11Z,14Z-eicosatetraenoyl)-ethanolamine + reduced [NADPH--hemoprotein reductase] + O2 = N-(11,12-epoxy-5Z,8Z,14Z-eicosatrienoyl)-ethanolamine + oxidized [NADPH--hemoprotein reductase] + H2O + H(+). The enzyme catalyses N-(5Z,8Z,11Z,14Z-eicosatetraenoyl)-ethanolamine + reduced [NADPH--hemoprotein reductase] + O2 = N-(14,15-epoxy-5Z,8Z,11Z-eicosatrienoyl)-ethanolamine + oxidized [NADPH--hemoprotein reductase] + H2O + H(+). It catalyses the reaction N-(5Z,8Z,11Z,14Z-eicosatetraenoyl)-ethanolamine + reduced [NADPH--hemoprotein reductase] + O2 = N-(20-hydroxy-5Z,8Z,11Z,14Z-eicosatetraenoyl)-ethanolamine + oxidized [NADPH--hemoprotein reductase] + H2O + H(+). It carries out the reaction (5Z,8Z,11Z,14Z,17Z)-eicosapentaenoate + reduced [NADPH--hemoprotein reductase] + O2 = (17S,18R)-epoxy-(5Z,8Z,11Z,14Z)-eicosatetraenoate + oxidized [NADPH--hemoprotein reductase] + H2O + H(+). The catalysed reaction is (4Z,7Z,10Z,13Z,16Z,19Z)-docosahexaenoate + reduced [NADPH--hemoprotein reductase] + O2 = (19R,20S)-epoxy-(4Z,7Z,10Z,13Z,16Z)-docosapentaenoate + oxidized [NADPH--hemoprotein reductase] + H2O + H(+). The enzyme catalyses (4Z,7Z,10Z,13Z,16Z,19Z)-docosahexaenoate + reduced [NADPH--hemoprotein reductase] + O2 = (19S,20R)-epoxy-(4Z,7Z,10Z,13Z,16Z)-docosapentaenoate + oxidized [NADPH--hemoprotein reductase] + H2O + H(+). It catalyses the reaction cholesterol + reduced [NADPH--hemoprotein reductase] + O2 = 25-hydroxycholesterol + oxidized [NADPH--hemoprotein reductase] + H2O + H(+). It carries out the reaction all-trans-retinol + reduced [NADPH--hemoprotein reductase] + O2 = all-trans-retinal + oxidized [NADPH--hemoprotein reductase] + 2 H2O + H(+). It participates in cofactor metabolism; retinol metabolism. Its pathway is lipid metabolism; fatty acid metabolism. It functions in the pathway steroid metabolism; cholesterol metabolism. In terms of biological role, a cytochrome P450 monooxygenase involved in the metabolism of fatty acids, steroids and retinoids. Mechanistically, uses molecular oxygen inserting one oxygen atom into a substrate, and reducing the second into a water molecule, with two electrons provided by NADPH via cytochrome P450 reductase (NADPH--hemoprotein reductase). Catalyzes the epoxidation of double bonds of polyunsaturated fatty acids (PUFA). Metabolizes endocannabinoid arachidonoylethanolamide (anandamide) to 20-hydroxyeicosatetraenoic acid ethanolamide (20-HETE-EA) and 8,9-, 11,12-, and 14,15-epoxyeicosatrienoic acid ethanolamides (EpETrE-EAs), potentially modulating endocannabinoid system signaling. Catalyzes the hydroxylation of carbon-hydrogen bonds. Metabolizes cholesterol toward 25-hydroxycholesterol, a physiological regulator of cellular cholesterol homeostasis. Catalyzes the oxidative transformations of all-trans retinol to all-trans retinal, a precursor for the active form all-trans-retinoic acid. Also involved in the oxidative metabolism of drugs such as antiarrhythmics, adrenoceptor antagonists, and tricyclic antidepressants. In Pan troglodytes (Chimpanzee), this protein is Cytochrome P450 2D6 (CYP2D6).